The chain runs to 269 residues: Ribosomal RNA small subunit methyltransferase A (269 aa).

Residues Ile-17, Gly-42, Glu-64, Asp-89, and Asn-109 each contribute to the S-adenosyl-L-methionine site.

This sequence belongs to the class I-like SAM-binding methyltransferase superfamily. rRNA adenine N(6)-methyltransferase family. RsmA subfamily.

The protein resides in the cytoplasm. It carries out the reaction adenosine(1518)/adenosine(1519) in 16S rRNA + 4 S-adenosyl-L-methionine = N(6)-dimethyladenosine(1518)/N(6)-dimethyladenosine(1519) in 16S rRNA + 4 S-adenosyl-L-homocysteine + 4 H(+). Functionally, specifically dimethylates two adjacent adenosines (A1518 and A1519) in the loop of a conserved hairpin near the 3'-end of 16S rRNA in the 30S particle. May play a critical role in biogenesis of 30S subunits. The polypeptide is Ribosomal RNA small subunit methyltransferase A (Anaplasma phagocytophilum (strain HZ)).